The chain runs to 255 residues: Ornithine decarboxylase antizyme (255 aa).

This sequence belongs to the ODC antizyme family. Interacts with ODC and thereby sterically blocks ODC homodimerization.

Functionally, ornithine decarboxylase (ODC) antizyme protein that negatively regulates ODC activity and intracellular polyamine biosynthesis in response to increased intracellular polyamine levels. Binds to ODC monomers, inhibiting the assembly of the functional ODC homodimer, and targets the monomers for ubiquitin-independent proteolytic destruction by the 26S proteasome. This Candida glabrata (strain ATCC 2001 / BCRC 20586 / JCM 3761 / NBRC 0622 / NRRL Y-65 / CBS 138) (Yeast) protein is Ornithine decarboxylase antizyme (OAZ1).